The chain runs to 352 residues: C-C chemokine receptor type 5 (352 aa).

Residues 1–30 (MDYQVSSPTYDIDYYTSEPCQKINVKQIAA) are Extracellular-facing. Y3 is modified (sulfotyrosine). 2 O-linked (GalNAc...) serine glycosylation sites follow: S6 and S7. Sulfotyrosine occurs at positions 10, 14, and 15. Intrachain disulfides connect C20-C269 and C101-C178. A helical transmembrane segment spans residues 31-58 (RLLPPLYSLVFIFGFVGNILVVLILINC). The Cytoplasmic portion of the chain corresponds to 59–68 (KRLKSMTDIY). The helical transmembrane segment at 69–89 (LLNLAISDLLFLLTVPFWAHY) threads the bilayer. The Extracellular portion of the chain corresponds to 90-102 (AAAQWDFGNTMCQ). A helical membrane pass occupies residues 103 to 124 (LLTGLYFIGFFSGIFFIILLTI). Residues 125 to 141 (DRYLAIVHAVFALKART) are Cytoplasmic-facing. The helical transmembrane segment at 142 to 166 (VTFGVVTSVITWVVAVFASLPGIIF) threads the bilayer. The Extracellular portion of the chain corresponds to 167 to 198 (TRSQREGLHYTCSSHFPYSQYQFWKNFQTLKI). The helical transmembrane segment at 199–218 (VILGLVLPLLVMVICYSGIL) threads the bilayer. Topologically, residues 219 to 235 (KTLLRCRNEKKRHRAVR) are cytoplasmic. The chain crosses the membrane as a helical span at residues 236-260 (LIFTIMIVYFLFWAPYNIVLLLNTF). The Extracellular segment spans residues 261–277 (QEFFGLNNCSSSNRLDQ). A helical membrane pass occupies residues 278-301 (AMQVTETLGMTHCCINPIIYAFVG). At 302–352 (EKFRNYLLVFFQKHIAKRFCKCCSIFQQEASERASSVYTRSTGEQEISVGL) the chain is on the cytoplasmic side. 3 S-palmitoyl cysteine lipidation sites follow: C321, C323, and C324. Phosphoserine; by BARK1 is present on residues S336, S337, S342, and S349.

It belongs to the G-protein coupled receptor 1 family. As to quaternary structure, interacts with PRAF2. Efficient ligand binding to CCL3/MIP-1alpha and CCL4/MIP-1beta requires sulfation, O-glycosylation and sialic acid modifications. Glycosylation on Ser-6 is required for efficient binding of CCL4. Interacts with GRK2. Interacts with ARRB1 and ARRB2. Interacts with CNIH4. Interacts with S100A4; this interaction stimulates T-lymphocyte chemotaxis. Sulfated on at least 2 of the N-terminal tyrosines. Sulfation is required for efficient binding of the chemokines, CCL3 and CCL4. Post-translationally, palmitoylation in the C-terminal is important for cell surface expression. In terms of processing, phosphorylation on serine residues in the C-terminal is stimulated by binding CC chemokines especially by APO-RANTES. O-glycosylated, but not N-glycosylated. Ser-6 appears to be the major site even if Ser-7 may be also O-glycosylated. Also sialylated glycans present which contribute to chemokine binding. Thr-16 and Ser-17 may also be glycosylated and, if so, with small moieties such as a T-antigen.

It is found in the cell membrane. Receptor for a number of inflammatory CC-chemokines including CCL3/MIP-1-alpha, CCL4/MIP-1-beta and RANTES and subsequently transduces a signal by increasing the intracellular calcium ion level. May play a role in the control of granulocytic lineage proliferation or differentiation. Participates in T-lymphocyte migration to the infection site by acting as a chemotactic receptor. The polypeptide is C-C chemokine receptor type 5 (CCR5) (Cercocebus galeritus (Tana river mangabey)).